Here is a 350-residue protein sequence, read N- to C-terminus: MTLEEQQAKEALDGIIKKSRVHLYKPIQIAEILYHDRCIKQLDFLNLDTYRNQSKRWRDEICRRFLGRISTSSAKFQDNLFEKNAIPPEKLAVLGTLNRQSDGGVESYIYKQFFNRFSQMSERLAYVGNTDRYSFQLSEFLNLFWLEPGLKRSIDKIYEIVVYALFDALVSELGITVSIDFPKENLFLWEEYQDFAEKIITMPKNEHLKLPAKIHRVGVTNAADRGLDMWSNFGLAIQVKHLSLDEELAEDIVSSISADRIVIVCKKAEQSVIVSLLTQIGWKSRIQNIVTEDDLISWYEKALRGQYPIAEALLENIKTEIMREFPAVNEANEFLDFAQNRGYDITVTHF.

It carries out the reaction Endonucleolytic cleavage of DNA to give specific double-stranded fragments with terminal 5'-phosphates.. Its function is as follows. A P subtype restriction enzyme that recognizes the double-stranded sequence 5'-RGCGCY-3'; the cleavage site is unknown. This chain is Type II restriction enzyme NgoBI (ngoBIR), found in Neisseria gonorrhoeae.